Reading from the N-terminus, the 507-residue chain is E3 SUMO-protein ligase PIAS4 (507 aa).

Ala-2 is subject to N-acetylalanine. A Glycyl lysine isopeptide (Lys-Gly) (interchain with G-Cter in SUMO2) cross-link involves residue Lys-9. The 35-residue stretch at 12–46 (VMSFRVSDLQMLLGFVGRSKSGLKHELVTRALQLV) folds into the SAP domain. The LXXLL motif signature appears at 20–24 (LQMLL). Lys-35 is covalently cross-linked (Glycyl lysine isopeptide (Lys-Gly) (interchain with G-Cter in SUMO); alternate). Lys-35 participates in a covalent cross-link: Glycyl lysine isopeptide (Lys-Gly) (interchain with G-Cter in SUMO2); alternate. Residues Lys-56, Lys-59, Lys-68, and Lys-69 each participate in a glycyl lysine isopeptide (Lys-Gly) (interchain with G-Cter in SUMO2) cross-link. Lys-107 carries the N6-acetyllysine modification. In terms of domain architecture, PINIT spans 112–272 (LGRLPTKTLK…SVALYLVRQL (161 aa)). Lys-118 participates in a covalent cross-link: Glycyl lysine isopeptide (Lys-Gly) (interchain with G-Cter in SUMO2). Lys-128 is covalently cross-linked (Glycyl lysine isopeptide (Lys-Gly) (interchain with G-Cter in SUMO)). The SP-RING-type zinc finger occupies 304–385 (PDSEIATTGV…LSKILSECEG (82 aa)). 4 residues coordinate Zn(2+): Cys-335, His-337, Cys-358, and Cys-361. The interval 426–507 (APASSTPGIG…PFQKGLVPAC (82 aa)) is disordered. Over residues 434–450 (IGSGLSGPGSAGSGAGA) the composition is skewed to gly residues. Residues 474–489 (SEDEDEDEDDDEDEDE) show a composition bias toward acidic residues.

The protein belongs to the PIAS family. In terms of assembly, interacts with AR, GATA2, LEF1, TP53 and STAT1 (IFNG-induced). Interacts with TICAM1. Interacts with MTA1. Interacts with PRDM1/Blimp-1. Interacts with TRIM32 upon treatment with UVB and TNF-alpha. As to quaternary structure, (Microbial infection) Interacts ewith Moloney murine leukemia virus Capsid protein p30. In terms of processing, sumoylated. Lys-35 is the main site of sumoylation. Sumoylation is required for TCF4 sumoylation and transcriptional activation. Represses LEF1 transcriptional activity. SUMO1 is the preferred conjugate. Ubiquitinated by TRIM32 upon treatment with UVB and TNF-alpha. As to expression, widely expressed, with highest levels in testis. Also expressed in vascular endothelial cells, in primary keratinocytes and in the CNS, including cortex, olfactory bulb, spinal cord, thalamus and trigeminal ganglion. Low expression, if any, in liver and lung.

The protein localises to the nucleus. Its subcellular location is the PML body. The enzyme catalyses S-ubiquitinyl-[E2 ubiquitin-conjugating enzyme]-L-cysteine + [acceptor protein]-L-lysine = [E2 ubiquitin-conjugating enzyme]-L-cysteine + N(6)-ubiquitinyl-[acceptor protein]-L-lysine.. It participates in protein modification; protein sumoylation. Its function is as follows. Functions as an E3-type small ubiquitin-like modifier (SUMO) ligase, stabilizing the interaction between UBE2I and the substrate, and as a SUMO-tethering factor. Mediates sumoylation of ALKBH5, AXIN1, CEBPA, KLF8, GATA2, PARK7, HERC2, MYB, TCF4 and RNF168. Plays a crucial role as a transcriptional coregulation in various cellular pathways, including the STAT pathway, the p53/TP53 pathway, the Wnt pathway and the steroid hormone signaling pathway. Involved in gene silencing. In Wnt signaling, represses LEF1 and enhances TCF4 transcriptional activities through promoting their sumoylations. Enhances the sumoylation of MTA1 and may participate in its paralog-selective sumoylation. Binds to AT-rich DNA sequences, known as matrix or scaffold attachment regions (MARs/SARs). Catalyzes conjugation of SUMO2 to KAT5 in response to DNA damage, facilitating repair of DNA double-strand breaks (DSBs) via homologous recombination (HR). Mediates sumoylation of PARP1 in response to PARP1 trapping to chromatin. Mediates sumoylation of KLF8, repressiing KLF8 transcriptional activity and cell cycle progression into G(1) phase. Sumoylates ALKBH5 downstream of MAPK8/JNK1 and MAPK9/JNK2 in response to reactive oxygen species (ROS), inhibiting ALKBH5 RNA demethylase activity. This Mus musculus (Mouse) protein is E3 SUMO-protein ligase PIAS4 (Pias4).